Here is a 64-residue protein sequence, read N- to C-terminus: Large ribosomal subunit protein bL35 (64 aa).

Residues 1–15 (MPKSKTHSGTAKRFK) show a composition bias toward basic residues. The segment at 1–23 (MPKSKTHSGTAKRFKVSGSGKIL) is disordered.

It belongs to the bacterial ribosomal protein bL35 family.

In Rhodococcus jostii (strain RHA1), this protein is Large ribosomal subunit protein bL35.